A 409-amino-acid polypeptide reads, in one-letter code: Na(+)-translocating NADH-quinone reductase subunit F (409 aa).

Residues 5–25 (FIFGIIAFTALVLVLAVIILF) form a helical membrane-spanning segment. The 95-residue stretch at 34-128 (GDITISINDD…SMDVELPEEI (95 aa)) folds into the 2Fe-2S ferredoxin-type domain. Residues Cys-71, Cys-77, Cys-80, and Cys-112 each coordinate [2Fe-2S] cluster. The region spanning 131–271 (VKKWECTVIS…SGPFGEFFAK (141 aa)) is the FAD-binding FR-type domain.

This sequence belongs to the NqrF family. In terms of assembly, composed of six subunits; NqrA, NqrB, NqrC, NqrD, NqrE and NqrF. Requires [2Fe-2S] cluster as cofactor. FAD serves as cofactor.

The protein localises to the cell inner membrane. The enzyme catalyses a ubiquinone + n Na(+)(in) + NADH + H(+) = a ubiquinol + n Na(+)(out) + NAD(+). In terms of biological role, NQR complex catalyzes the reduction of ubiquinone-1 to ubiquinol by two successive reactions, coupled with the transport of Na(+) ions from the cytoplasm to the periplasm. The first step is catalyzed by NqrF, which accepts electrons from NADH and reduces ubiquinone-1 to ubisemiquinone by a one-electron transfer pathway. In Haemophilus ducreyi (strain 35000HP / ATCC 700724), this protein is Na(+)-translocating NADH-quinone reductase subunit F.